The following is a 187-amino-acid chain: MSRFYFFFNLICLYLAIKSALSAELDTNDQKYADLRTTGRGESPDSTGPDSDTLRRDDGAEGLNKRAAAMWFGPRLGKRTIAADLHDDLVEEFDAEPLGYAGEPPQKLATELVQGAPYMVLLVTAKPRKPQPIFYHTTSPRLGRRDSVGENHQRPPFAPRLGRNLPFSPRLGRSYNGGYPLPFQFAY.

Residues 1–22 (MSRFYFFFNLICLYLAIKSALS) form the signal peptide. Positions 23–64 (AELDTNDQKYADLRTTGRGESPDSTGPDSDTLRRDDGAEGLN) are excised as a propeptide. The span at 34–43 (DLRTTGRGES) shows a compositional bias: basic and acidic residues. Residues 34 to 58 (DLRTTGRGESPDSTGPDSDTLRRDD) form a disordered region. Leu76 bears the Leucine amide mark. The propeptide occupies 80-127 (TIAADLHDDLVEEFDAEPLGYAGEPPQKLATELVQGAPYMVLLVTAKP). Positions 132 to 163 (PIFYHTTSPRLGRRDSVGENHQRPPFAPRLGR) are disordered. Residue Leu142 is modified to Leucine amide. The segment covering 143-153 (GRRDSVGENHQ) has biased composition (basic and acidic residues). Leucine amide is present on residues Leu161 and Leu171. A propeptide spanning residues 174–187 (SYNGGYPLPFQFAY) is cleaved from the precursor.

It belongs to the pyrokinin family.

The protein localises to the secreted. In terms of biological role, a hormone that controls sex pheromone production in females and pheromone responsiveness in male. Also mediates visceral muscle contractile activity (myotropic activity). The sequence is that of PBAN-type neuropeptides from Anopheles gambiae (African malaria mosquito).